The sequence spans 593 residues: Cytochrome c oxidase polypeptide 1 (593 aa).

Transmembrane regions (helical) follow at residues 5-25 (ASSI…VAVL) and 71-91 (IGIL…VSVL). H117 contacts Fe(II)-heme a. Helical transmembrane passes span 122–142 (LFLF…PLLI), 154–174 (AIAF…FLIP), 204–224 (GLHL…ATIF), 246–266 (QSGL…MLLL), 288–308 (LFWF…MGIV), and 320–340 (LFGF…SFGV). 2 residues coordinate Cu cation: H294 and Y298. A cross-link (1'-histidyl-3'-tyrosine (His-Tyr)) is located at residues 294-298 (HPEVY). Cu cation is bound by residues H343 and H344. Transmembrane regions (helical) follow at residues 358–378 (FMAV…NWIT), 401–421 (FIIG…LILH), 425–445 (YVVG…LFAA), 467–487 (FWTA…LGYG), and 506–526 (LATV…FNMA). Position 429 (H429) interacts with heme a3. Residue H431 participates in Fe(II)-heme a binding. The disordered stretch occupies residues 562 to 593 (TTVLPDGGDEAQSEADAVTDGGQPAADSDTES).

This sequence belongs to the heme-copper respiratory oxidase family.

The protein localises to the cell membrane. The enzyme catalyses 4 Fe(II)-[cytochrome c] + O2 + 8 H(+)(in) = 4 Fe(III)-[cytochrome c] + 2 H2O + 4 H(+)(out). It participates in energy metabolism; oxidative phosphorylation. In terms of biological role, cytochrome c oxidase is the component of the respiratory chain that catalyzes the reduction of oxygen to water. Subunits 1-3 form the functional core of the enzyme complex. CO I is the catalytic subunit of the enzyme. Electrons originating in cytochrome c are transferred via the copper A center of subunit 2 and heme A of subunit 1 to the bimetallic center formed by heme A3 and copper B. The polypeptide is Cytochrome c oxidase polypeptide 1 (coxA2) (Halobacterium salinarum (strain ATCC 700922 / JCM 11081 / NRC-1) (Halobacterium halobium)).